A 31-amino-acid polypeptide reads, in one-letter code: Cytochrome b6-f complex subunit 6 (31 aa).

A helical membrane pass occupies residues threonine 3 to isoleucine 23.

The protein belongs to the PetL family. In terms of assembly, the 4 large subunits of the cytochrome b6-f complex are cytochrome b6, subunit IV (17 kDa polypeptide, PetD), cytochrome f and the Rieske protein, while the 4 small subunits are PetG, PetL, PetM and PetN. The complex functions as a dimer.

It is found in the plastid. The protein resides in the chloroplast thylakoid membrane. Component of the cytochrome b6-f complex, which mediates electron transfer between photosystem II (PSII) and photosystem I (PSI), cyclic electron flow around PSI, and state transitions. PetL is important for photoautotrophic growth as well as for electron transfer efficiency and stability of the cytochrome b6-f complex. In Abies homolepis (Nikko fir), this protein is Cytochrome b6-f complex subunit 6.